Reading from the N-terminus, the 344-residue chain is Molybdate/tungstate import ATP-binding protein WtpC (344 aa).

Positions 2–231 (LRVESVSKDY…PVDEGVARFL (230 aa)) constitute an ABC transporter domain. ATP is bound at residue 33 to 40 (GPSGAGKT). Positions 280-344 (KTSARNEFRA…SFKTSAIKVF (65 aa)) constitute a Mop domain.

It belongs to the ABC transporter superfamily. Sulfate/tungstate importer (TC 3.A.1.6) family. As to quaternary structure, the complex is composed of two ATP-binding proteins (WtpC), two transmembrane proteins (WtpB) and a solute-binding protein (WtpA).

It localises to the cell membrane. The enzyme catalyses tungstate(in) + ATP + H2O = tungstate(out) + ADP + phosphate + H(+). Functionally, part of the ABC transporter complex WtpABC involved in molybdate/tungstate import. Responsible for energy coupling to the transport system. In Pyrococcus abyssi (strain GE5 / Orsay), this protein is Molybdate/tungstate import ATP-binding protein WtpC (wtpC).